The chain runs to 192 residues: uncharacterized protein (192 aa).

The 132-residue stretch at 29–160 folds into the Nudix hydrolase domain; sequence HRQAAVLIPI…PLDIYRRGDS (132 aa). Residues 67 to 89 carry the Nudix box motif; sequence GAVDDTDASVIAAALREAEEEVA. Residues Glu-83 and Glu-87 each coordinate Mg(2+).

This sequence belongs to the Nudix hydrolase family. PCD1 subfamily. It depends on Mn(2+) as a cofactor. Mg(2+) serves as cofactor.

Functionally, probably mediates the hydrolysis of some nucleoside diphosphate derivatives. This is an uncharacterized protein from Shigella boydii serotype 4 (strain Sb227).